The sequence spans 300 residues: Fatty acid hydroxylase uhd1 (300 aa).

Residues 14 to 20, Arg-39, 63 to 64, 83 to 85, Tyr-156, Lys-160, 183 to 186, and Ser-199 each bind NADP(+); these read GANGFVG, DL, VAS, and PVYI. The active-site Proton donor is the Lys-160.

It belongs to the NAD(P)-dependent epimerase/dehydratase family. Dihydroflavonol-4-reductase subfamily.

It participates in secondary metabolite biosynthesis. Functionally, fatty acid hydroxylase; part of the gene cluster that mediates the biosynthesis of the glycolipid biosurfactant ustilagic acid (UA). UA is a secreted cellobiose glycolipid that is toxic for many microorganisms and confers biocontrol activity to U.maydis. UA consists of 15,16-dihydroxypalmitic or 2,15,16-trihydroxypalmitic acid, which is O-glycosidically linked to cellobiose at its terminal hydroxyl group. In addition, the cellobiose moiety is acetylated and acylated with a short-chain hydroxy fatty acid. UA biosynthesis starts with omega-hydroxylation of palmitic acid catalyzed by the cytochrome P450 monooxygenase cyp1. Terminal hydroxylation of palmitic acid precedes subterminal hydroxylation catalyzed by the cytochrome P450 monooxygenase cyp2. Sequential glucosylation of the hydroxy fatty acid is probably catalyzed by the glycosyltransferase ugt1. The cellobiose lipid is further decorated by acetylation of the proximal glucose residue and by acylation with a short-chain beta-hydroxy fatty acid at the distal glucose residue. The acyltransferase uat1 may be a good candidate for catalyzing either acetylation or acylation of the cellobiose lipid. The fatty acid synthase fas2 may be involved in synthesis of the carbon backbone of the short-chain beta-hydroxy fatty acid esterified to the cellobiose disaccharide. The secreted UA consists of a mixture of both alpha-hydroxylated and non-hydroxylated glycolipids; therefore, alpha-hydroxylation of the long-chain fatty, catalyzed by the fatty acid hydroxylase ahd1, occurs late in UA biosynthesis and may be the last step before secretion. The chain is Fatty acid hydroxylase uhd1 from Mycosarcoma maydis (Corn smut fungus).